Consider the following 353-residue polypeptide: uncharacterized protein (353 aa).

The first 20 residues, 1-20 (MLMRSVCFILLAVLLFSLSA), serve as a signal peptide directing secretion. Cysteine 21 carries N-palmitoyl cysteine lipidation. A lipid anchor (S-diacylglycerol cysteine) is attached at cysteine 21.

The protein localises to the cell membrane. This is an uncharacterized protein from Bacillus subtilis (strain 168).